The sequence spans 2276 residues: Non-reducing polyketide synthase VdtA (2276 aa).

The tract at residues 8 to 243 is N-terminal acylcarrier protein transacylase (SAT) domain; sequence YLFGDQTYDY…KDIPIHAPYH (236 aa). Residues 372–804 form the Ketosynthase family 3 (KS3) domain; that stretch reads RAKIAIVGMS…GGNSSVLVED (433 aa). Catalysis depends on for beta-ketoacyl synthase activity residues C544, H679, and H723. A malonyl-CoA:ACP transacylase (MAT) domain region spans residues 905–1206; sequence FTFTGQGAQY…KALPTLQRNR (302 aa). S996 functions as the For acyl/malonyl transferase activity in the catalytic mechanism. Positions 1300-1616 are product template (PT) domain; sequence TTTLHRIVDE…PRRVLRYILQ (317 aa). The segment at 1304-1438 is N-terminal hotdog fold; that stretch reads HRIVDEKSTE…CRIKFSDRST (135 aa). Positions 1304–1612 constitute a PKS/mFAS DH domain; that stretch reads HRIVDEKSTE…IQGVPRRVLR (309 aa). Catalysis depends on H1336, which acts as the Proton acceptor; for dehydratase activity. Residues 1465 to 1612 are C-terminal hotdog fold; the sequence is TYRFNGPMAY…IQGVPRRVLR (148 aa). The active-site Proton donor; for dehydratase activity is D1525. In terms of domain architecture, Carrier 1 spans 1655 to 1729; it reads SGTLTEALRI…DLKRFFDKIN (75 aa). S1689 bears the O-(pantetheine 4'-phosphoryl)serine mark. A disordered region spans residues 1735–1762; that stretch reads APAPVSDAPKQLQPSSSPVASATPSAPI. The segment covering 1748–1761 has biased composition (low complexity); that stretch reads PSSSPVASATPSAP. One can recognise a Carrier 2 domain in the interval 1765–1839; the sequence is RSKFESVLNI…DLKAHFMSKN (75 aa). O-(pantetheine 4'-phosphoryl)serine is present on S1799. The segment covering 1840 to 1854 has biased composition (polar residues); the sequence is SDNGSSAVLTPQPSR. The tract at residues 1840–1882 is disordered; sequence SDNGSSAVLTPQPSRDSALPERTRPRVADTSDEEDAPVSANEF. Residues 1857-1868 show a composition bias toward basic and acidic residues; sequence ALPERTRPRVAD. In terms of domain architecture, Carrier 3 spans 1886–1964; sequence ARSTSKYMAV…GLRSFFGFES (79 aa). S1923 bears the O-(pantetheine 4'-phosphoryl)serine mark. Residues 1967 to 1993 form a disordered region; it reads TATNPTASQSSSSISSGTSVFDTSPSP. Positions 1969-1990 are enriched in low complexity; that stretch reads TNPTASQSSSSISSGTSVFDTS. The tract at residues 2020–2271 is thioesterase (TE) domain; that stretch reads PLPPATSVTL…GADHFSLLVS (252 aa).

The protein localises to the cytoplasmic vesicle. It catalyses the reaction 7 malonyl-CoA + acetyl-CoA + 7 H(+) = 7,9,10-trihydroxy-3-(2-oxopropyl)-1H-benzo[g]isochromen-1-one + 7 CO2 + 8 CoA + 2 H2O. Its pathway is secondary metabolite biosynthesis. Its function is as follows. Non-reducing polyketide synthase; part of the gene cluster that mediates the biosynthesis of viriditoxin, one of the 'classical' secondary metabolites produced by fungi and that has antibacterial activity. The first step is performed by the polyketide synthase VdtA which condenses one acetyl-CoA and 6 malonyl-CoA units to form the heptaketide monomer backbone of viriditoxin. The product of VdtA is then O-methylated on C7 by the O-methyltransferase VdtC. The O-methyl group is important for the stereoselective coupling of the monomers at the final step of viriditoxin biosynthesis. The short-chain dehydrogenase/reductase VdtF then acts as a stereospecific reductase converting the pyrone to dihydropyrone via the reduction of the C3-C4 double bond. The FAD-binding monooxygenase VdtE then converts the ketone group into a methyl-ester group to yield semi-viriditoxin. Finally, the laccase VdtB is involved in dimerization of 2 semi-viriditoxin molecules to yield the final viriditoxin. VdtB is responsible for the regioselective 6,6'-coupling of semi-viriditoxin, which yields (M)-viriditoxin and (P)-viriditoxin at a ratio of 1:2. The non-catalytic carboxylesterase-like protein VdtD affects the stereochemistical outcome of the coupling. The highly reducing polyketide synthase VdtX is not involved in viriditoxin synthesis, but might possibly play a role in the production of additional metabolites not identified yet. The protein is Non-reducing polyketide synthase VdtA of Byssochlamys spectabilis (Paecilomyces variotii).